The following is a 206-amino-acid chain: Ribonuclease HII (206 aa).

The RNase H type-2 domain maps to 19–206 (ALIAGVDEVG…GPVKRALGIE (188 aa)). A divalent metal cation contacts are provided by D25, E26, and D117.

It belongs to the RNase HII family. Requires Mn(2+) as cofactor. Mg(2+) serves as cofactor.

The protein localises to the cytoplasm. It carries out the reaction Endonucleolytic cleavage to 5'-phosphomonoester.. Its function is as follows. Endonuclease that specifically degrades the RNA of RNA-DNA hybrids. This is Ribonuclease HII from Vibrio cholerae serotype O1 (strain M66-2).